Reading from the N-terminus, the 509-residue chain is Maturase K (509 aa).

The protein belongs to the intron maturase 2 family. MatK subfamily.

Its subcellular location is the plastid. The protein localises to the chloroplast. Its function is as follows. Usually encoded in the trnK tRNA gene intron. Probably assists in splicing its own and other chloroplast group II introns. The sequence is that of Maturase K from Nicotiana bigelovii (Bigelov's tobacco).